We begin with the raw amino-acid sequence, 284 residues long: Pantothenate synthetase (284 aa).

30–37 (MGNLHDGH) contacts ATP. The active-site Proton donor is His37. Residue Gln61 coordinates (R)-pantoate. Residue Gln61 coordinates beta-alanine. 149 to 152 (GEKD) lines the ATP pocket. (R)-pantoate is bound at residue Gln155. ATP contacts are provided by residues Val178 and 186–189 (LSSR).

It belongs to the pantothenate synthetase family. In terms of assembly, homodimer.

It localises to the cytoplasm. The catalysed reaction is (R)-pantoate + beta-alanine + ATP = (R)-pantothenate + AMP + diphosphate + H(+). It participates in cofactor biosynthesis; (R)-pantothenate biosynthesis; (R)-pantothenate from (R)-pantoate and beta-alanine: step 1/1. Catalyzes the condensation of pantoate with beta-alanine in an ATP-dependent reaction via a pantoyl-adenylate intermediate. This Klebsiella pneumoniae subsp. pneumoniae (strain ATCC 700721 / MGH 78578) protein is Pantothenate synthetase.